An 80-amino-acid polypeptide reads, in one-letter code: DinI-like protein Z2083/ECs2153 (80 aa).

The sequence is that of DinI-like protein Z2083/ECs2153 from Escherichia coli O157:H7.